The following is a 269-amino-acid chain: MEEDGLNNRNWGYYEPSQFRPNLGFQLIPSILDRNEKPFLSPHSQNLNFITPSNVYGGGSSSVVSYPRDYTVSDAPFMSYSWLNQHKDSKFFSNVPEVSRMTQSMQLLQPEVVTEVDESVKRRHCSGGQRGGVPKVKKEKKLKDNNMPRVQRERSPLLRKCIEMVINGVSMDIGGLPVPVCSCTGMPQQCYRWGCGGWQSACCTTNVSMYPLPVNTKRRGARIAGRKMSQGAFRKVLEKLSSDGFDFSNPIDLKSHWAKHGTNKFVTIR.

It belongs to the BBR/BPC family. In terms of tissue distribution, expressed in seedlings, leaves and pistils. Detected in the base of flowers and tips of carpels, in petal vasculature, in anthers, in young rosette, in the lateral and primary roots, and in the gynobasal portion of the ovule.

The protein resides in the nucleus. Functionally, transcriptional regulator that specifically binds to GA-rich elements (GAGA-repeats) present in regulatory sequences of genes involved in developmental processes. In Arabidopsis thaliana (Mouse-ear cress), this protein is Protein BASIC PENTACYSTEINE3 (BPC3).